Consider the following 339-residue polypeptide: Methylthioribose-1-phosphate isomerase (339 aa).

Residues 52–54, R89, and Q188 contribute to the substrate site; that span reads RGA. Residue D229 is the Proton donor of the active site. 239–240 is a binding site for substrate; that stretch reads NK.

It belongs to the eIF-2B alpha/beta/delta subunits family. MtnA subfamily.

It catalyses the reaction 5-(methylsulfanyl)-alpha-D-ribose 1-phosphate = 5-(methylsulfanyl)-D-ribulose 1-phosphate. It functions in the pathway amino-acid biosynthesis; L-methionine biosynthesis via salvage pathway; L-methionine from S-methyl-5-thio-alpha-D-ribose 1-phosphate: step 1/6. Its function is as follows. Catalyzes the interconversion of methylthioribose-1-phosphate (MTR-1-P) into methylthioribulose-1-phosphate (MTRu-1-P). The polypeptide is Methylthioribose-1-phosphate isomerase (Anaeromyxobacter sp. (strain K)).